The chain runs to 326 residues: Target of rapamycin complex subunit lst8 (326 aa).

WD repeat units follow at residues 1-37 (MNVN…CTRT), 40-80 (HQDS…PVIN), 83-122 (GVSK…LQCQ), 126-165 (QVNA…NEQL), 168-207 (EPDV…GDEV), 218-257 (AHKR…LMTE), and 268-309 (TSRG…REYS).

The protein belongs to the WD repeat LST8 family. As to quaternary structure, part of the mechanistic target of rapamycin complex 1 (mTORC1) which contains MTOR, MLST8 and RPTOR. Component of the mechanistic target of rapamycin complex 2 (mTORC2), consisting in two heterotretramers composed of MTOR, MLST8, RICTOR and MAPKAP1/SIN1.

It localises to the lysosome membrane. The protein resides in the cytoplasm. Functionally, subunit of both mTORC1 and mTORC2, which regulates cell growth and survival in response to nutrient and hormonal signals. mTORC1 is activated in response to growth factors or amino acids. In response to nutrients, mTORC1 is recruited to the lysosome membrane and promotes protein, lipid and nucleotide synthesis by phosphorylating several substrates, such as ribosomal protein S6 kinase (RPS6KB1 and RPS6KB2) and EIF4EBP1 (4E-BP1). In the same time, it inhibits catabolic pathways by phosphorylating the autophagy initiation components ULK1 and ATG13, as well as transcription factor TFEB, a master regulators of lysosomal biogenesis and autophagy. The mTORC1 complex is inhibited in response to starvation and amino acid depletion. Within mTORC1, MLST8 interacts directly with MTOR and enhances its kinase activity. In nutrient-poor conditions, stabilizes the MTOR-RPTOR interaction and favors RPTOR-mediated inhibition of MTOR activity. As part of the mTORC2 complex, transduces signals from growth factors to pathways involved in proliferation, cytoskeletal organization, lipogenesis and anabolic output. mTORC2 is also activated by growth factors, but seems to be nutrient-insensitive. In response to growth factors, mTORC2 phosphorylates and activates AGC protein kinase family members, including AKT (AKT1, AKT2 and AKT3), PKC (PRKCA, PRKCB and PRKCE) and SGK1. mTORC2 functions upstream of Rho GTPases to regulate the actin cytoskeleton, probably by activating one or more Rho-type guanine nucleotide exchange factors. mTORC2 promotes the serum-induced formation of stress-fibers or F-actin. Within mTORC2, MLST8 acts as a bridge between MAPKAP1/SIN1 and MTOR. The chain is Target of rapamycin complex subunit lst8 (mlst8) from Danio rerio (Zebrafish).